The sequence spans 389 residues: Probable L-tyrosine/L-aspartate decarboxylase (389 aa).

Lys-233 is subject to N6-(pyridoxal phosphate)lysine.

The protein belongs to the group II decarboxylase family. MfnA subfamily. It depends on pyridoxal 5'-phosphate as a cofactor.

The catalysed reaction is L-tyrosine + H(+) = tyramine + CO2. It catalyses the reaction L-aspartate + H(+) = beta-alanine + CO2. Its pathway is cofactor biosynthesis; methanofuran biosynthesis. It participates in cofactor biosynthesis; coenzyme A biosynthesis. In terms of biological role, catalyzes the decarboxylation of L-tyrosine to produce tyramine for methanofuran biosynthesis. Can also catalyze the decarboxylation of L-aspartate to produce beta-alanine for coenzyme A (CoA) biosynthesis. The sequence is that of Probable L-tyrosine/L-aspartate decarboxylase from Methanosphaera stadtmanae (strain ATCC 43021 / DSM 3091 / JCM 11832 / MCB-3).